The following is a 216-amino-acid chain: Small ribosomal subunit protein uS3c (216 aa).

One can recognise a KH type-2 domain in the interval 43–116 (IKNYVQKNMR…RLNIAITRVA (74 aa)).

This sequence belongs to the universal ribosomal protein uS3 family. In terms of assembly, part of the 30S ribosomal subunit.

Its subcellular location is the plastid. The protein resides in the chloroplast. This is Small ribosomal subunit protein uS3c (rps3) from Drimys granadensis.